The chain runs to 354 residues: Guanine nucleotide-binding protein alpha-3 subunit (354 aa).

The N-myristoyl glycine moiety is linked to residue Gly-2. Residue Cys-4 is the site of S-palmitoyl cysteine attachment. Residues 32-354 (KVVKLLLLGA…QANLQGCGLY (323 aa)) enclose the G-alpha domain. Residues 35–48 (KLLLLGAGECGKST) form a G1 motif region. Residues 40–47 (GAGECGKS), 176–182 (LLSRIKT), 201–205 (DVGGQ), 270–273 (NKKD), and Ala-326 each bind GTP. Ser-47 and Thr-182 together coordinate Mg(2+). Residues 174 to 182 (DILLSRIKT) are G2 motif. A G3 motif region spans residues 197-206 (FRVFDVGGQR). The interval 266–273 (ILFLNKKD) is G4 motif. Residues 324–329 (TCATDT) are G5 motif.

It belongs to the G-alpha family. G(q) subfamily. As to quaternary structure, g proteins are composed of 3 units; alpha, beta and gamma. The alpha chain contains the guanine nucleotide binding site.

Functionally, guanine nucleotide-binding proteins (G proteins) are involved as modulators or transducers in various transmembrane signaling systems. Promotes transcription of 3',5'-cyclic phosphodiesterases pde-1 and pde-5, leading to reduced cGMP levels in sensory neurons. This causes suppression of insulin production and signaling which leads to increased daf-16 activity and contributes to increased adult lifespan and resistance to oxidative stress. In addition, by reducing cGMP levels, inhibits TGF-beta signaling pathways. Involved in behavioral response to P.aeruginosa by controlling the expression of daf-7, a member of the TGF-beta family, in ASJ sensory neurons. The protein is Guanine nucleotide-binding protein alpha-3 subunit (gpa-3) of Caenorhabditis briggsae.